The chain runs to 243 residues: Ubiquinone biosynthesis O-methyltransferase (243 aa).

Positions 44, 64, 85, and 129 each coordinate S-adenosyl-L-methionine.

The protein belongs to the methyltransferase superfamily. UbiG/COQ3 family.

It carries out the reaction a 3-demethylubiquinol + S-adenosyl-L-methionine = a ubiquinol + S-adenosyl-L-homocysteine + H(+). The enzyme catalyses a 3-(all-trans-polyprenyl)benzene-1,2-diol + S-adenosyl-L-methionine = a 2-methoxy-6-(all-trans-polyprenyl)phenol + S-adenosyl-L-homocysteine + H(+). Its pathway is cofactor biosynthesis; ubiquinone biosynthesis. In terms of biological role, O-methyltransferase that catalyzes the 2 O-methylation steps in the ubiquinone biosynthetic pathway. The protein is Ubiquinone biosynthesis O-methyltransferase of Cronobacter sakazakii (strain ATCC BAA-894) (Enterobacter sakazakii).